The chain runs to 510 residues: Ribonuclease Y (510 aa).

A helical transmembrane segment spans residues 1 to 21; sequence MLIYILSGLGVLVGALLGYVV. Residues 200-260 enclose the KH domain; it reads TVSTIMLPND…LRREIAKRTI (61 aa). The region spanning 326 to 419 is the HD domain; that stretch reads VLNHSIEVAL…VAAADALSAA (94 aa).

It belongs to the RNase Y family.

It localises to the cell membrane. Endoribonuclease that initiates mRNA decay. The polypeptide is Ribonuclease Y (Thermosipho melanesiensis (strain DSM 12029 / CIP 104789 / BI429)).